Reading from the N-terminus, the 144-residue chain is Large ribosomal subunit protein uL15 (144 aa).

The tract at residues 1–44 (MNLNELQPAAGSRKLRNRVGRGTSSGNGKTSGRGQKGQKARGKV) is disordered. A compositionally biased stretch (gly residues) spans 23–35 (TSSGNGKTSGRGQ).

Belongs to the universal ribosomal protein uL15 family. Part of the 50S ribosomal subunit.

Its function is as follows. Binds to the 23S rRNA. The polypeptide is Large ribosomal subunit protein uL15 (Leuconostoc citreum (strain KM20)).